We begin with the raw amino-acid sequence, 521 residues long: Type-2 serine--tRNA ligase (521 aa).

Ala316 is a binding site for L-serine. Cys318 contributes to the Zn(2+) binding site. Position 347 (Arg347) interacts with L-serine. ATP-binding positions include 347-349 and 358-359; these read RWE and RV. 364–366 serves as a coordination point for L-serine; sequence RVE. Zn(2+)-binding residues include Glu366 and Cys473. ATP is bound at residue Arg480.

It belongs to the class-II aminoacyl-tRNA synthetase family. Type-2 seryl-tRNA synthetase subfamily. In terms of assembly, homodimer. The cofactor is Zn(2+).

Its subcellular location is the cytoplasm. The enzyme catalyses tRNA(Ser) + L-serine + ATP = L-seryl-tRNA(Ser) + AMP + diphosphate + H(+). The catalysed reaction is tRNA(Sec) + L-serine + ATP = L-seryl-tRNA(Sec) + AMP + diphosphate + H(+). It functions in the pathway aminoacyl-tRNA biosynthesis; selenocysteinyl-tRNA(Sec) biosynthesis; L-seryl-tRNA(Sec) from L-serine and tRNA(Sec): step 1/1. In terms of biological role, catalyzes the attachment of serine to tRNA(Ser). Is also able to aminoacylate tRNA(Sec) with serine, to form the misacylated tRNA L-seryl-tRNA(Sec), which will be further converted into selenocysteinyl-tRNA(Sec). This is Type-2 serine--tRNA ligase (serS) from Methanocaldococcus jannaschii (strain ATCC 43067 / DSM 2661 / JAL-1 / JCM 10045 / NBRC 100440) (Methanococcus jannaschii).